Here is a 639-residue protein sequence, read N- to C-terminus: Threonine--tRNA ligase (639 aa).

Residues 1 to 62 (MYQLTLPDKS…ETDANIEVLT (62 aa)) form the TGS domain. Residues 246–537 (DHRKIGKELD…LIEHYEGKFP (292 aa)) are catalytic. Residues C337, H388, and H514 each contribute to the Zn(2+) site.

This sequence belongs to the class-II aminoacyl-tRNA synthetase family. Homodimer. The cofactor is Zn(2+).

The protein localises to the cytoplasm. The catalysed reaction is tRNA(Thr) + L-threonine + ATP = L-threonyl-tRNA(Thr) + AMP + diphosphate + H(+). In terms of biological role, catalyzes the attachment of threonine to tRNA(Thr) in a two-step reaction: L-threonine is first activated by ATP to form Thr-AMP and then transferred to the acceptor end of tRNA(Thr). Also edits incorrectly charged L-seryl-tRNA(Thr). This Leptospira borgpetersenii serovar Hardjo-bovis (strain JB197) protein is Threonine--tRNA ligase.